The chain runs to 158 residues: DNA-binding transcriptional repressor RacR (158 aa).

As to quaternary structure, homooctamer.

In terms of biological role, transcriptional regulator that represses the expression of ydaS and ydaT under normal physiological conditions. It binds to its own upstream sequence and represses the adjacent and divergently coded ydaS-ydaT operon. RacR-mediated down-regulation of ydaS and ydaT may be critical for cell survival. RacR ensures that the prophage DNA is maintained in the genome. When the expression of the racR gene is reduced, the prophage Rac is excised from the genome, possibly to counteract the lethal toxicity of YdaT. This is DNA-binding transcriptional repressor RacR (racR) from Escherichia coli (strain K12).